The primary structure comprises 260 residues: Exosome complex component Rrp4 (260 aa).

An S1 motif domain is found at 59–128 (NDVVIGVVIV…SSMKIELALR (70 aa)). In terms of domain architecture, KH spans 136 to 194 (RTGQIVEVEPVKVPRVIGHGGSMISMLKKETNCSIFVGQNGRIWIDGKDEDIELLSKAL).

The protein belongs to the RRP4 family. Component of the archaeal exosome complex. Forms a trimer of Rrp4 and/or Csl4 subunits. The trimer associates with a hexameric ring-like arrangement composed of 3 Rrp41-Rrp42 heterodimers.

Its subcellular location is the cytoplasm. Its function is as follows. Non-catalytic component of the exosome, which is a complex involved in RNA degradation. Increases the RNA binding and the efficiency of RNA degradation. Confers strong poly(A) specificity to the exosome. The polypeptide is Exosome complex component Rrp4 (Methanosarcina mazei (strain ATCC BAA-159 / DSM 3647 / Goe1 / Go1 / JCM 11833 / OCM 88) (Methanosarcina frisia)).